A 275-amino-acid chain; its full sequence is Adaptin ear-binding coat-associated protein 1 (275 aa).

A disordered region spans residues 166 to 190 (ITTKKGGTSKPKTAGTGGLSLLPPP). Low complexity predominate over residues 167–179 (TTKKGGTSKPKTA). Thr-211 carries the post-translational modification Phosphothreonine. The tract at residues 215–275 (IPKSNHGGSD…APQPSNWVQF (61 aa)) is disordered. Short sequence motifs (WXXF motif) lie at residues 252–255 (WGDF) and 272–275 (WVQF). Positions 256-275 (STASSSVPNQAPQPSNWVQF) are enriched in polar residues.

Belongs to the NECAP family. Interacts with AP1G1 and AP2A1 components of the adapter protein complexes AP-1 and AP-2. Interacts with the GAE domain proteins GGA1, GGA2 and GGA3.

The protein localises to the cytoplasmic vesicle. The protein resides in the clathrin-coated vesicle membrane. It localises to the cell membrane. Functionally, involved in endocytosis. In Bos taurus (Bovine), this protein is Adaptin ear-binding coat-associated protein 1 (NECAP1).